A 236-amino-acid chain; its full sequence is 2-C-methyl-D-erythritol 4-phosphate cytidylyltransferase (236 aa).

Belongs to the IspD/TarI cytidylyltransferase family. IspD subfamily. In terms of assembly, homodimer.

The enzyme catalyses 2-C-methyl-D-erythritol 4-phosphate + CTP + H(+) = 4-CDP-2-C-methyl-D-erythritol + diphosphate. The protein operates within isoprenoid biosynthesis; isopentenyl diphosphate biosynthesis via DXP pathway; isopentenyl diphosphate from 1-deoxy-D-xylulose 5-phosphate: step 2/6. Its function is as follows. Catalyzes the formation of 4-diphosphocytidyl-2-C-methyl-D-erythritol from CTP and 2-C-methyl-D-erythritol 4-phosphate (MEP). The sequence is that of 2-C-methyl-D-erythritol 4-phosphate cytidylyltransferase from Escherichia coli O139:H28 (strain E24377A / ETEC).